The primary structure comprises 122 residues: Small ribosomal subunit protein uS13 (122 aa).

Positions 95–122 are disordered; sequence GLPVRGQKTKTNARTRKGPKRTVANKKK.

The protein belongs to the universal ribosomal protein uS13 family. In terms of assembly, part of the 30S ribosomal subunit. Forms a loose heterodimer with protein S19. Forms two bridges to the 50S subunit in the 70S ribosome.

In terms of biological role, located at the top of the head of the 30S subunit, it contacts several helices of the 16S rRNA. In the 70S ribosome it contacts the 23S rRNA (bridge B1a) and protein L5 of the 50S subunit (bridge B1b), connecting the 2 subunits; these bridges are implicated in subunit movement. Contacts the tRNAs in the A and P-sites. This Agathobacter rectalis (strain ATCC 33656 / DSM 3377 / JCM 17463 / KCTC 5835 / VPI 0990) (Eubacterium rectale) protein is Small ribosomal subunit protein uS13.